Here is a 234-residue protein sequence, read N- to C-terminus: Probable transcriptional regulatory protein Pfl01_3677 (234 aa).

It belongs to the TACO1 family.

The protein localises to the cytoplasm. This Pseudomonas fluorescens (strain Pf0-1) protein is Probable transcriptional regulatory protein Pfl01_3677.